A 402-amino-acid chain; its full sequence is GPI mannosyltransferase 1 (402 aa).

The next 10 helical transmembrane spans lie at 5–25, 79–99, 108–128, 162–182, 191–211, 238–258, 260–280, 309–329, 333–353, and 365–385; these read VILLLTVSLLLRIGFFSYGIF, WIHMGKVFFVLFDLITGVMII, LTKQLILASIWLLNPIVITIS, LSIHFKIYPIIYALPIGIYLL, IWRLFMIGISTLIGITAPTYF, FSIWNLVLLLESAGIHLSQSI, LSKLAFVPQLTLCAVLPYLLW, QYFIWYLVLSPFYFANTTITW, VVCIFLWILSQAVWLSQAYLL, and LFFGNIVFFLINVYLLGVFIT.

It belongs to the PIGM family.

The protein resides in the endoplasmic reticulum membrane. The protein operates within glycolipid biosynthesis; glycosylphosphatidylinositol-anchor biosynthesis. In terms of biological role, mannosyltransferase involved in glycosylphosphatidylinositol-anchor biosynthesis. Transfers the first alpha-1,4-mannose to GlcN-acyl-PI during GPI precursor assembly. Required for cell wall integrity. The chain is GPI mannosyltransferase 1 (GPI14) from Kluyveromyces lactis (strain ATCC 8585 / CBS 2359 / DSM 70799 / NBRC 1267 / NRRL Y-1140 / WM37) (Yeast).